A 186-amino-acid chain; its full sequence is Tumor necrosis factor, alpha-induced protein 8-like protein 2 B (186 aa).

It belongs to the TNFAIP8 family. TNFAIP8L2 subfamily.

Its function is as follows. Acts as a negative regulator of innate and adaptive immunity by maintaining immune homeostasis. Negative regulator of Toll-like receptor and T-cell receptor function. Prevents hyperresponsiveness of the immune system and maintains immune homeostasis. Inhibits jun/ap1 and NF-kappa-B activation. Promotes Fas-induced apoptosis. The sequence is that of Tumor necrosis factor, alpha-induced protein 8-like protein 2 B (tnfaip8l2b) from Danio rerio (Zebrafish).